The following is a 589-amino-acid chain: Vesicular glutamate transporter 3 (589 aa).

Residues 1 to 76 (MPFKAFDTFK…CHCCGLPKRY (76 aa)) are Cytoplasmic-facing. Residues 40-49 (TEEEDNIELN) show a composition bias toward acidic residues. Residues 40–61 (TEEEDNIELNEEGRPVQTSRPS) are disordered. The helical transmembrane segment at 77 to 97 (IIAIMSGLGFCISFGIRCNLG) threads the bilayer. Residues 98–130 (VAIVEMVNNSTVYVDGKPEIQTAQFNWDPETVG) are Vesicular-facing. Residue Asn-106 is glycosylated (N-linked (GlcNAc...) asparagine). Residues 131-151 (LIHGSFFWGYIMTQIPGGFIS) form a helical membrane-spanning segment. At 152 to 153 (NK) the chain is on the cytoplasmic side. A helical transmembrane segment spans residues 154–174 (FAANRVFGAAIFLTSTLNMFI). At 175–182 (PSAARVHY) the chain is on the vesicular side. A helical transmembrane segment spans residues 183-203 (GCVMCVRILQGLVEGVTYPAC). The Cytoplasmic segment spans residues 204–221 (HGMWSKWAPPLERSRLAT). The chain crosses the membrane as a helical span at residues 222–242 (TSFCGSYAGAVVAMPLAGVLV). The Vesicular segment spans residues 243-249 (QYIGWSS). A helical transmembrane segment spans residues 250 to 270 (VFYIYGMFGIIWYMFWLLQAY). The Cytoplasmic portion of the chain corresponds to 271 to 314 (ECPAAHPTISNEEKTYIETSIGEGANVVSLSKFSTPWKRFFTSL). A helical membrane pass occupies residues 315-335 (PVYAIIVANFCRSWTFYLLLI). Topologically, residues 336-353 (SQPAYFEEVFGFAISKVG) are vesicular. The chain crosses the membrane as a helical span at residues 354-374 (LLSAVPHMVMTIVVPIGGQLA). At 375 to 390 (DYLRSRQILTTTAVRK) the chain is on the cytoplasmic side. The helical transmembrane segment at 391–411 (IMNCGGFGMEATLLLVVGFSH) threads the bilayer. The Vesicular segment spans residues 412-413 (TK). The chain crosses the membrane as a helical span at residues 414-434 (GVAISFLVLAVGFSGFAISGF). Residues 435–447 (NVNHLDIAPRYAS) lie on the Cytoplasmic side of the membrane. A helical transmembrane segment spans residues 448-468 (ILMGISNGVGTLSGMVCPLIV). At 469 to 481 (GAMTRHKTREEWQ) the chain is on the vesicular side. A helical transmembrane segment spans residues 482-502 (NVFLIAALVHYSGVIFYGVFA). The Cytoplasmic portion of the chain corresponds to 503–586 (SGEKQEWADP…SYQNEERNFS (84 aa)). Residues 559–589 (KKEWKGQRGATLDEEELTSYQNEERNFSTIS) form a disordered region. The span at 580–589 (NEERNFSTIS) shows a compositional bias: basic and acidic residues.

The protein belongs to the major facilitator superfamily. Sodium/anion cotransporter family. VGLUT subfamily. Expressed in amygdala, cerebellum, hippocampus, medulla, spinal cord and thalamus.

It localises to the cytoplasmic vesicle. The protein localises to the secretory vesicle. The protein resides in the synaptic vesicle membrane. It is found in the cell membrane. Its subcellular location is the synapse. It localises to the synaptosome. The catalysed reaction is L-glutamate(out) = L-glutamate(in). The enzyme catalyses 3 Na(+)(out) + phosphate(out) = 3 Na(+)(in) + phosphate(in). It carries out the reaction chloride(in) = chloride(out). Its activity is regulated as follows. The L-glutamate uniporter activity exhibits a biphasic dependence on chloride concentration. Chloride channel activity is allosterically activated by lumenal H(+) and Cl(-) leading to synaptic vesicles acidification. The glutamate transport activity is allosterically activated by lumenal H(+) and Cl(-), preventing non-vesicular L-glutamate release. Its function is as follows. Multifunctional transporter that transports L-glutamate as well as multiple ions such as chloride, sodium and phosphate. At the synaptic vesicle membrane, mainly functions as an uniporter that mediates the uptake of L-glutamate into synaptic vesicles at presynaptic nerve terminals of excitatory neural cells. The L-glutamate uniporter activity is electrogenic and is driven by the proton electrochemical gradient, mainly by the electrical gradient established by the vacuolar H(+)-ATPase across the synaptic vesicle membrane. In addition, functions as a chloride channel that allows a chloride permeation through the synaptic vesicle membrane that affects the proton electrochemical gradient and promotes synaptic vesicles acidification. At the plasma membrane, following exocytosis, functions as a symporter of Na(+) and phosphate from the extracellular space to the cytoplasm allowing synaptic phosphate homeostasis regulation. The symporter activity is electrogenic. Moreover, operates synergistically with SLC18A3/VACHT under a constant H(+) gradient, thereby allowing striatal vesicular acetylcholine uptake. This Homo sapiens (Human) protein is Vesicular glutamate transporter 3.